The primary structure comprises 499 residues: Guanosine-5'-triphosphate,3'-diphosphate pyrophosphatase (499 aa).

The protein belongs to the GppA/Ppx family. GppA subfamily.

It catalyses the reaction guanosine 3'-diphosphate 5'-triphosphate + H2O = guanosine 3',5'-bis(diphosphate) + phosphate + H(+). It functions in the pathway purine metabolism; ppGpp biosynthesis; ppGpp from GTP: step 2/2. In terms of biological role, catalyzes the conversion of pppGpp to ppGpp. Guanosine pentaphosphate (pppGpp) is a cytoplasmic signaling molecule which together with ppGpp controls the 'stringent response', an adaptive process that allows bacteria to respond to amino acid starvation, resulting in the coordinated regulation of numerous cellular activities. The protein is Guanosine-5'-triphosphate,3'-diphosphate pyrophosphatase of Klebsiella pneumoniae subsp. pneumoniae (strain ATCC 700721 / MGH 78578).